The primary structure comprises 201 residues: Large ribosomal subunit protein uL4 (201 aa).

The disordered stretch occupies residues alanine 45–glycine 66.

It belongs to the universal ribosomal protein uL4 family. As to quaternary structure, part of the 50S ribosomal subunit.

One of the primary rRNA binding proteins, this protein initially binds near the 5'-end of the 23S rRNA. It is important during the early stages of 50S assembly. It makes multiple contacts with different domains of the 23S rRNA in the assembled 50S subunit and ribosome. Its function is as follows. Forms part of the polypeptide exit tunnel. In Aeromonas salmonicida (strain A449), this protein is Large ribosomal subunit protein uL4.